A 240-amino-acid chain; its full sequence is ATP-dependent dethiobiotin synthetase BioD 1 (240 aa).

Aspartate 13–valine 18 is an ATP binding site. Threonine 17 lines the Mg(2+) pocket. Lysine 38 is an active-site residue. Residue serine 42 participates in substrate binding. ATP-binding positions include aspartate 55, glutamate 116–glycine 119, asparagine 176–glutamate 177, proline 205–leucine 207, and glutamate 212. Residues aspartate 55 and glutamate 116 each coordinate Mg(2+).

The protein belongs to the dethiobiotin synthetase family. Homodimer. Mg(2+) serves as cofactor.

It localises to the cytoplasm. The enzyme catalyses (7R,8S)-7,8-diammoniononanoate + CO2 + ATP = (4R,5S)-dethiobiotin + ADP + phosphate + 3 H(+). It functions in the pathway cofactor biosynthesis; biotin biosynthesis; biotin from 7,8-diaminononanoate: step 1/2. Functionally, catalyzes a mechanistically unusual reaction, the ATP-dependent insertion of CO2 between the N7 and N8 nitrogen atoms of 7,8-diaminopelargonic acid (DAPA, also called 7,8-diammoniononanoate) to form a ureido ring. This is ATP-dependent dethiobiotin synthetase BioD 1 from Yersinia pestis.